The following is an 88-amino-acid chain: Apolipoprotein C-I (88 aa).

Residues 1–26 (MRLFLSLPVLVVVLAMVLEGPAPAQA) form the signal peptide.

This sequence belongs to the apolipoprotein C1 family.

The protein resides in the secreted. In terms of biological role, inhibitor of lipoprotein binding to the low density lipoprotein (LDL) receptor, LDL receptor-related protein, and very low density lipoprotein (VLDL) receptor. Associates with high density lipoproteins (HDL) and the triacylglycerol-rich lipoproteins in the plasma and makes up about 10% of the protein of the VLDL and 2% of that of HDL. Appears to interfere directly with fatty acid uptake and is also the major plasma inhibitor of cholesteryl ester transfer protein (CETP). Binds free fatty acids and reduces their intracellular esterification. Modulates the interaction of APOE with beta-migrating VLDL and inhibits binding of beta-VLDL to the LDL receptor-related protein. The protein is Apolipoprotein C-I (APOC1) of Ailurus fulgens (Himalayan red panda).